Consider the following 92-residue polypeptide: C-C motif chemokine 4-like (92 aa).

Positions 1–23 (MKLCVTVLSLLVLVAAFCSLALS) are cleaved as a signal peptide. 2 disulfide bridges follow: cysteine 34/cysteine 58 and cysteine 35/cysteine 74.

It belongs to the intercrine beta (chemokine CC) family. As to quaternary structure, interacts with CCR5. Detected in B-cells.

The protein localises to the secreted. Functionally, chemokine that induces chemotaxis of cells expressing CCR5 or CCR1. Inhibits HIV replication in peripheral blood monocytes that express CCR5. The polypeptide is C-C motif chemokine 4-like (CCL4L1) (Homo sapiens (Human)).